The primary structure comprises 285 residues: 4-diphosphocytidyl-2-C-methyl-D-erythritol kinase (285 aa).

Residue K10 is part of the active site. 93-103 (PIGGGLGGGSS) lines the ATP pocket. Residue D135 is part of the active site.

The protein belongs to the GHMP kinase family. IspE subfamily.

It carries out the reaction 4-CDP-2-C-methyl-D-erythritol + ATP = 4-CDP-2-C-methyl-D-erythritol 2-phosphate + ADP + H(+). The protein operates within isoprenoid biosynthesis; isopentenyl diphosphate biosynthesis via DXP pathway; isopentenyl diphosphate from 1-deoxy-D-xylulose 5-phosphate: step 3/6. Its function is as follows. Catalyzes the phosphorylation of the position 2 hydroxy group of 4-diphosphocytidyl-2C-methyl-D-erythritol. This chain is 4-diphosphocytidyl-2-C-methyl-D-erythritol kinase, found in Ruthia magnifica subsp. Calyptogena magnifica.